Here is a 320-residue protein sequence, read N- to C-terminus: tRNA uridine(34) hydroxylase (320 aa).

Residues 123-217 (EDENTVILDA…YGKDPETKGQ (95 aa)) enclose the Rhodanese domain. The active-site Cysteine persulfide intermediate is Cys177.

The protein belongs to the TrhO family.

It catalyses the reaction uridine(34) in tRNA + AH2 + O2 = 5-hydroxyuridine(34) in tRNA + A + H2O. Catalyzes oxygen-dependent 5-hydroxyuridine (ho5U) modification at position 34 in tRNAs. The sequence is that of tRNA uridine(34) hydroxylase from Staphylococcus epidermidis (strain ATCC 12228 / FDA PCI 1200).